The primary structure comprises 51 residues: Sperm protamine P1 (51 aa).

Cystine bridges form between cysteine 7–cysteine 15 and cysteine 40–cysteine 48.

This sequence belongs to the protamine P1 family. As to quaternary structure, cross-linked by interchain disulfide bonds around the DNA-helix. As to expression, testis.

It is found in the nucleus. It localises to the chromosome. Its function is as follows. Protamines substitute for histones in the chromatin of sperm during the haploid phase of spermatogenesis. They compact sperm DNA into a highly condensed, stable and inactive complex. This Capra hircus (Goat) protein is Sperm protamine P1 (PRM1).